The sequence spans 662 residues: Serine/threonine-protein kinase PTK1/STK1 (662 aa).

The segment at 35–119 (GNKLKKKASL…SSTSRNLSNS (85 aa)) is disordered. A compositionally biased stretch (low complexity) spans 50–60 (STSTNDSESSS). Composition is skewed to polar residues over residues 61 to 91 (PKLP…SAST) and 98 to 119 (GSST…LSNS). The 308-residue stretch at 196–503 (DDENKTIGWG…IDDLFEDPWF (308 aa)) folds into the Protein kinase domain. ATP is bound by residues 202–210 (IGWGGSCEV) and lysine 226. Aspartate 329 functions as the Proton acceptor in the catalytic mechanism. Positions 605 to 631 (TLTLSEEPPATPAPSAPSAPSARVRGH) are disordered.

It belongs to the protein kinase superfamily. Ser/Thr protein kinase family.

It carries out the reaction L-seryl-[protein] + ATP = O-phospho-L-seryl-[protein] + ADP + H(+). It catalyses the reaction L-threonyl-[protein] + ATP = O-phospho-L-threonyl-[protein] + ADP + H(+). In terms of biological role, essential determinant for low-affinity spermidine transport. The polypeptide is Serine/threonine-protein kinase PTK1/STK1 (PTK1) (Saccharomyces cerevisiae (strain ATCC 204508 / S288c) (Baker's yeast)).